Reading from the N-terminus, the 352-residue chain is Selenide, water dikinase (352 aa).

Cys-23 is a catalytic residue. Residues Lys-26 and 54–56 (SRD) contribute to the ATP site. Asp-57 contacts Mg(2+). ATP-binding positions include Asp-74, Asp-97, and 145-147 (GHS). Mg(2+) is bound at residue Asp-97. Mg(2+) is bound at residue Asp-233.

The protein belongs to the selenophosphate synthase 1 family. Class I subfamily. Homodimer. Mg(2+) serves as cofactor.

It catalyses the reaction hydrogenselenide + ATP + H2O = selenophosphate + AMP + phosphate + 2 H(+). Functionally, synthesizes selenophosphate from selenide and ATP. This is Selenide, water dikinase from Shewanella sp. (strain MR-4).